The chain runs to 302 residues: uncharacterized protein (302 aa).

The first 22 residues, 1–22 (MLVVFKRLGFIVSIFSLTFLSA), serve as a signal peptide directing secretion. A lipid anchor (N-palmitoyl cysteine) is attached at Cys23. Cys23 carries the S-diacylglycerol cysteine lipid modification.

It belongs to the MG067/MG068/MG395 family.

It localises to the cell membrane. This is an uncharacterized protein from Mycoplasma pneumoniae (strain ATCC 29342 / M129 / Subtype 1) (Mycoplasmoides pneumoniae).